The sequence spans 94 residues: Pyrimidine/purine nucleoside phosphorylase (94 aa).

It belongs to the nucleoside phosphorylase PpnP family.

The catalysed reaction is a purine D-ribonucleoside + phosphate = a purine nucleobase + alpha-D-ribose 1-phosphate. It carries out the reaction adenosine + phosphate = alpha-D-ribose 1-phosphate + adenine. It catalyses the reaction cytidine + phosphate = cytosine + alpha-D-ribose 1-phosphate. The enzyme catalyses guanosine + phosphate = alpha-D-ribose 1-phosphate + guanine. The catalysed reaction is inosine + phosphate = alpha-D-ribose 1-phosphate + hypoxanthine. It carries out the reaction thymidine + phosphate = 2-deoxy-alpha-D-ribose 1-phosphate + thymine. It catalyses the reaction uridine + phosphate = alpha-D-ribose 1-phosphate + uracil. The enzyme catalyses xanthosine + phosphate = alpha-D-ribose 1-phosphate + xanthine. Catalyzes the phosphorolysis of diverse nucleosides, yielding D-ribose 1-phosphate and the respective free bases. Can use uridine, adenosine, guanosine, cytidine, thymidine, inosine and xanthosine as substrates. Also catalyzes the reverse reactions. The sequence is that of Pyrimidine/purine nucleoside phosphorylase from Escherichia fergusonii (strain ATCC 35469 / DSM 13698 / CCUG 18766 / IAM 14443 / JCM 21226 / LMG 7866 / NBRC 102419 / NCTC 12128 / CDC 0568-73).